Reading from the N-terminus, the 348-residue chain is Protein pelota homolog (348 aa).

The protein belongs to the eukaryotic release factor 1 family. Pelota subfamily. Monomer. Requires a divalent metal cation as cofactor.

It localises to the cytoplasm. Functionally, may function in recognizing stalled ribosomes, interact with stem-loop structures in stalled mRNA molecules, and effect endonucleolytic cleavage of the mRNA. May play a role in the release non-functional ribosomes and degradation of damaged mRNAs. Has endoribonuclease activity. In Methanococcus vannielii (strain ATCC 35089 / DSM 1224 / JCM 13029 / OCM 148 / SB), this protein is Protein pelota homolog.